Here is a 305-residue protein sequence, read N- to C-terminus: Thioredoxin reductase (305 aa).

Position 28–35 (28–35 (LGIETSSQ)) interacts with FAD. An intrachain disulfide couples Cys-129 to Cys-132. 272 to 281 (DCCDWIYRQA) serves as a coordination point for FAD.

This sequence belongs to the class-II pyridine nucleotide-disulfide oxidoreductase family. Homodimer. The cofactor is FAD.

Its subcellular location is the cytoplasm. The catalysed reaction is [thioredoxin]-dithiol + NADP(+) = [thioredoxin]-disulfide + NADPH + H(+). The chain is Thioredoxin reductase (TRXB) from Spironucleus barkhanus.